The sequence spans 260 residues: MAVGKNKKLSKGKGQKKRAVDPFTRKDWYDIKAPTFFENRNVGKTFVNRSQGLKNADDSLKGRIVEASLADLNKDDEQAYRKFKLKVDGIQGRTCLTNFYGMDFTSDKLRSLVRKWQSLIEAHQDVKTTDGYLLRVFVIAFTKKRANQVKKNTYAKSSHIRAIRQKMFEIVQREANSCDLREFVAKLIPEVIGREVEKATQGIFPLKDVYVRKVKVLKAPKDDLNKLLEVHGGAAIAGAEDAGVKARNTEFKEPAPLASV.

Alanine 2 is subject to N-acetylalanine; partial.

It belongs to the eukaryotic ribosomal protein eS1 family. In terms of assembly, component of the small ribosomal subunit. Mature ribosomes consist of a small (40S) and a large (60S) subunit. The 40S subunit contains about 33 different proteins and 1 molecule of RNA (18S). The 60S subunit contains about 49 different proteins and 3 molecules of RNA (25S, 5.8S and 5S).

The protein localises to the cytoplasm. This is Small ribosomal subunit protein eS1 from Mycosarcoma maydis (Corn smut fungus).